The sequence spans 281 residues: 4-diphosphocytidyl-2-C-methyl-D-erythritol kinase (281 aa).

Lys15 is an active-site residue. 98–108 provides a ligand contact to ATP; that stretch reads PTGAGLGGGSS. Residue Asp140 is part of the active site.

Belongs to the GHMP kinase family. IspE subfamily.

The enzyme catalyses 4-CDP-2-C-methyl-D-erythritol + ATP = 4-CDP-2-C-methyl-D-erythritol 2-phosphate + ADP + H(+). It functions in the pathway isoprenoid biosynthesis; isopentenyl diphosphate biosynthesis via DXP pathway; isopentenyl diphosphate from 1-deoxy-D-xylulose 5-phosphate: step 3/6. In terms of biological role, catalyzes the phosphorylation of the position 2 hydroxy group of 4-diphosphocytidyl-2C-methyl-D-erythritol. The polypeptide is 4-diphosphocytidyl-2-C-methyl-D-erythritol kinase (Neisseria meningitidis serogroup A / serotype 4A (strain DSM 15465 / Z2491)).